The chain runs to 1305 residues: MYSVEDLLISHGYKLSRKLPAPHEDDGERRQPARTTVPAGPGLLNGCDDGPAALPRGKASPGTGLLSDPESRRLGPRGHGERPSTAAAARISEAGFYHQPVLAWSSQPLTGRSHAYWRRREQEAREDPGGRGPVPSLPTHPREGPWEVGGRSEHVMKKAVWEDELGMAGPARWQDVSVRSWNQPPRLGRQMSDGVGEKLFQDLYPFMLGEHGLTSQSKGKSQSLPRVLSPESLSCMEVPIPLSDGHLPGVPKVPLQPPNCASNLESTRNPKKAGTSAPLPQPRFGRPLKPPSYGSQPHSKAGAENGSYTDSRQLDPGAAHSARTNSARQDLYGPDPGLEPPVYVPPPSYKSPPQPAAHPCPEEAVSRHEGRGRRVPQHPMERPAAGGQPLSGSRGAGSEWGASPCSPVGVPPQPHHTTAYDGSILIIPFDDPRIRHIKLPRPHGFWEDVKLDGAVPAPDPRSLQQEGAVWGPSGKERGPAPADPSPSWLWGQPPRNGENGSSPDQRDPCIVTQRKQPDVSGSPQEYPESLVSSPSPQGESSCEMQTQLRKFEAGLQPKRSSKKKTSETIFCLVSIPVKSESQLPGTDTNNNDLKQSASLQEQSVLSLSSTDLELQALTGSMATRTELPRPDPGGPGRGRQADDLRFPSPAKHRALAWPGPWPGHHFRDQQTQTSFAHEPQSLQPLPGERPGGSPDPVLPPRCLDPAPFEVQMHMALASSDPNQRPGAHSPKSQGSLSPSSNSAFSGSSWPRNQGPVPRASLGQQGSDGPGRRASPVSRGEVIKGETTGPCNSRQLFGQFLLKPVSRRPWDLISQLESFNKELQEEEGSSGSSSDGSGSEDSDTELPWGSCARPAPQLPGLLKDIVPEDPRTRPGRVKSKSESWSEEGRPRSPRPWQAEGRGSVWLSPPGSWIAEDGDREVEDRVAQLAVSPRPVKRAISSGLNDAKPEPPPDPAEQREPLPSQELPGSRGAVELSAAGPPRAGGGEQGSTRAPLSLAGKSRGLSAPDLRSVGLTLVQEHSTSQLAGSPGDANAIEIPPNESLEARAARILGIEVAVESLLPGAQRAGQRRHPEPDGSALRPESPRQEAAASLAQPNESTAPADAFYGRRKCGWTKSPLFVGERDSTRQVPRASEPADVDGAVPTKAPETPPSPLESQPFLPKDVETKPPFRSTLFHFIERTPNLAFSEKKLRNTSRVIESLQEKLVSPPRKADPDRLTRMKEVSSVSRMRLLTSRAADSAEEPKAERGPGAWLGGLVAPSAGHKLSDPQGALSLEADGHPAARRENGGRDFWCPDSYDPSRVERV.

Disordered regions lie at residues 13–86 (YKLS…PSTA), 120–151 (REQE…VGGR), 249–419 (GVPK…HTTA), 450–545 (KLDG…CEMQ), 575–604 (IPVK…EQSV), 616–795 (ALTG…SRQL), and 818–1005 (FNKE…GLSA). Basic and acidic residues-rich tracts occupy residues 21–31 (APHEDDGERRQ), 69–82 (PESR…HGER), 120–129 (REQEAREDPG), and 140–151 (HPREGPWEVGGR). Pro residues predominate over residues 337–358 (GLEPPVYVPPPSYKSPPQPAAH). Residues 360–369 (CPEEAVSRHE) show a composition bias toward basic and acidic residues. Polar residues-rich tracts occupy residues 530-545 (LVSS…CEMQ) and 579-594 (SESQ…NDLK). Over residues 595 to 604 (QSASLQEQSV) the composition is skewed to low complexity. Over residues 669–683 (QQTQTSFAHEPQSLQ) the composition is skewed to polar residues. The span at 729–748 (SPKSQGSLSPSSNSAFSGSS) shows a compositional bias: low complexity. Position 841 is a phosphoserine (serine 841). Basic and acidic residues-rich tracts occupy residues 878–889 (SKSESWSEEGRP) and 945–958 (AKPE…EQRE). 4 positions are modified to phosphoserine: serine 1004, serine 1010, serine 1152, and serine 1239. Disordered stretches follow at residues 1062–1166 (GAQR…DVET) and 1234–1305 (SRAA…VERV). Positions 1276 to 1288 (ADGHPAARRENGG) are enriched in basic and acidic residues.

The protein localises to the cell junction. It is found in the adherens junction. The chain is Junctional cadherin 5-associated protein (JCAD) from Bos taurus (Bovine).